A 280-amino-acid chain; its full sequence is Putative pyruvate, phosphate dikinase regulatory protein (280 aa).

149 to 156 (GVSRSSKT) serves as a coordination point for ADP.

The protein belongs to the pyruvate, phosphate/water dikinase regulatory protein family. PDRP subfamily.

The enzyme catalyses N(tele)-phospho-L-histidyl/L-threonyl-[pyruvate, phosphate dikinase] + ADP = N(tele)-phospho-L-histidyl/O-phospho-L-threonyl-[pyruvate, phosphate dikinase] + AMP + H(+). The catalysed reaction is N(tele)-phospho-L-histidyl/O-phospho-L-threonyl-[pyruvate, phosphate dikinase] + phosphate + H(+) = N(tele)-phospho-L-histidyl/L-threonyl-[pyruvate, phosphate dikinase] + diphosphate. Functionally, bifunctional serine/threonine kinase and phosphorylase involved in the regulation of the pyruvate, phosphate dikinase (PPDK) by catalyzing its phosphorylation/dephosphorylation. The sequence is that of Putative pyruvate, phosphate dikinase regulatory protein from Novosphingobium aromaticivorans (strain ATCC 700278 / DSM 12444 / CCUG 56034 / CIP 105152 / NBRC 16084 / F199).